The following is a 312-amino-acid chain: Acetyl-coenzyme A carboxylase carboxyl transferase subunit alpha (312 aa).

Residues 25–286 (GDDSAVEILK…GNYIIEKLNE (262 aa)) enclose the CoA carboxyltransferase C-terminal domain.

Belongs to the AccA family. Acetyl-CoA carboxylase is a heterohexamer composed of biotin carboxyl carrier protein (AccB), biotin carboxylase (AccC) and two subunits each of ACCase subunit alpha (AccA) and ACCase subunit beta (AccD).

It is found in the cytoplasm. The catalysed reaction is N(6)-carboxybiotinyl-L-lysyl-[protein] + acetyl-CoA = N(6)-biotinyl-L-lysyl-[protein] + malonyl-CoA. It functions in the pathway lipid metabolism; malonyl-CoA biosynthesis; malonyl-CoA from acetyl-CoA: step 1/1. In terms of biological role, component of the acetyl coenzyme A carboxylase (ACC) complex. First, biotin carboxylase catalyzes the carboxylation of biotin on its carrier protein (BCCP) and then the CO(2) group is transferred by the carboxyltransferase to acetyl-CoA to form malonyl-CoA. The chain is Acetyl-coenzyme A carboxylase carboxyl transferase subunit alpha from Campylobacter hominis (strain ATCC BAA-381 / DSM 21671 / CCUG 45161 / LMG 19568 / NCTC 13146 / CH001A).